The sequence spans 765 residues: Phosphoribosylformylglycinamidine synthase subunit PurL (765 aa).

H57 is a catalytic residue. 2 residues coordinate ATP: Y60 and R104. Residue E106 participates in Mg(2+) binding. Substrate-binding positions include 107-110 (SHNH) and R129. Catalysis depends on H108, which acts as the Proton acceptor. D130 is a Mg(2+) binding site. A substrate-binding site is contributed by Q254. D282 is a Mg(2+) binding site. 326–328 (ESQ) contributes to the substrate binding site. Residues N508 and G545 each coordinate ATP. N546 contributes to the Mg(2+) binding site. S548 contacts substrate.

It belongs to the FGAMS family. As to quaternary structure, monomer. Part of the FGAM synthase complex composed of 1 PurL, 1 PurQ and 2 PurS subunits.

Its subcellular location is the cytoplasm. The catalysed reaction is N(2)-formyl-N(1)-(5-phospho-beta-D-ribosyl)glycinamide + L-glutamine + ATP + H2O = 2-formamido-N(1)-(5-O-phospho-beta-D-ribosyl)acetamidine + L-glutamate + ADP + phosphate + H(+). The protein operates within purine metabolism; IMP biosynthesis via de novo pathway; 5-amino-1-(5-phospho-D-ribosyl)imidazole from N(2)-formyl-N(1)-(5-phospho-D-ribosyl)glycinamide: step 1/2. Its function is as follows. Part of the phosphoribosylformylglycinamidine synthase complex involved in the purines biosynthetic pathway. Catalyzes the ATP-dependent conversion of formylglycinamide ribonucleotide (FGAR) and glutamine to yield formylglycinamidine ribonucleotide (FGAM) and glutamate. The FGAM synthase complex is composed of three subunits. PurQ produces an ammonia molecule by converting glutamine to glutamate. PurL transfers the ammonia molecule to FGAR to form FGAM in an ATP-dependent manner. PurS interacts with PurQ and PurL and is thought to assist in the transfer of the ammonia molecule from PurQ to PurL. The sequence is that of Phosphoribosylformylglycinamidine synthase subunit PurL from Corynebacterium aurimucosum (strain ATCC 700975 / DSM 44827 / CIP 107346 / CN-1) (Corynebacterium nigricans).